The sequence spans 69 residues: UPF0150 protein AF_1072 (69 aa).

It belongs to the UPF0150 family.

This chain is UPF0150 protein AF_1072, found in Archaeoglobus fulgidus (strain ATCC 49558 / DSM 4304 / JCM 9628 / NBRC 100126 / VC-16).